A 156-amino-acid chain; its full sequence is Cell division protein SepF (156 aa).

Positions 23–36 (SYEKEQTDMKKQQD) are enriched in basic and acidic residues. A disordered region spans residues 23–48 (SYEKEQTDMKKQQDPPEQQDVTFPKA). The span at 37–48 (PPEQQDVTFPKA) shows a compositional bias: polar residues.

It belongs to the SepF family. In terms of assembly, homodimer. Interacts with FtsZ.

It is found in the cytoplasm. In terms of biological role, cell division protein that is part of the divisome complex and is recruited early to the Z-ring. Probably stimulates Z-ring formation, perhaps through the cross-linking of FtsZ protofilaments. Its function overlaps with FtsA. This chain is Cell division protein SepF, found in Bacillus cereus (strain ATCC 10987 / NRS 248).